The sequence spans 638 residues: Threonine--tRNA ligase (638 aa).

The region spanning 1–61 is the TGS domain; sequence MVAITLPDGK…DRDVNLSIIT (61 aa). A catalytic region spans residues 244–536; that stretch reads DHRRLGREME…LIENFAGRFP (293 aa). Cys-336, His-387, and His-513 together coordinate Zn(2+).

Belongs to the class-II aminoacyl-tRNA synthetase family. In terms of assembly, homodimer. Requires Zn(2+) as cofactor.

The protein resides in the cytoplasm. The enzyme catalyses tRNA(Thr) + L-threonine + ATP = L-threonyl-tRNA(Thr) + AMP + diphosphate + H(+). Its function is as follows. Catalyzes the attachment of threonine to tRNA(Thr) in a two-step reaction: L-threonine is first activated by ATP to form Thr-AMP and then transferred to the acceptor end of tRNA(Thr). Also edits incorrectly charged L-seryl-tRNA(Thr). The chain is Threonine--tRNA ligase from Paramagnetospirillum magneticum (strain ATCC 700264 / AMB-1) (Magnetospirillum magneticum).